Reading from the N-terminus, the 240-residue chain is Ribosome maturation protein SDO1 homolog (240 aa).

It belongs to the SDO1/SBDS family.

This chain is Ribosome maturation protein SDO1 homolog, found in Methanocaldococcus jannaschii (strain ATCC 43067 / DSM 2661 / JAL-1 / JCM 10045 / NBRC 100440) (Methanococcus jannaschii).